The chain runs to 330 residues: MAGWAGFELSALNPLRTLWLALAAAFLFALLLQLAPARLLPSCALFQDLLRYGKTKQSGSRRPAVCRAFDVPKRYFSHFYVISVVWNGSLLWLLSQSLFLGAPFPNWLSALLRTLGATQFQALEMESKASRMPAAELALSAFLVLVFLWVHSLRRLFECFYVSVFSNAAIHVVQYCFGLVYYVLVGLTVLSQVPMDDKNVYVLGKNLLIQARWFHILGMVMFFWSSAHQYKCHVILSNLRRNKKGVVIHCQHRIPFGDWFEYVSSANYLAELMIYISMAVTFGLHNLTWWLVVTYVFSSQALSAFFNHKFYRSTFVSYPKHRKAFLPFLF.

At 1-16 (MAGWAGFELSALNPLR) the chain is on the cytoplasmic side. The chain crosses the membrane as a helical span at residues 17-37 (TLWLALAAAFLFALLLQLAPA). Residues 38–80 (RLLPSCALFQDLLRYGKTKQSGSRRPAVCRAFDVPKRYFSHFY) are Lumenal-facing. The chain crosses the membrane as a helical span at residues 81–101 (VISVVWNGSLLWLLSQSLFLG). Residues 102 to 132 (APFPNWLSALLRTLGATQFQALEMESKASRM) lie on the Cytoplasmic side of the membrane. Residues 133-153 (PAAELALSAFLVLVFLWVHSL) form a helical membrane-spanning segment. Residues 154–169 (RRLFECFYVSVFSNAA) are Lumenal-facing. The chain crosses the membrane as a helical span at residues 170–190 (IHVVQYCFGLVYYVLVGLTVL). Residues 191 to 206 (SQVPMDDKNVYVLGKN) are Cytoplasmic-facing. A helical transmembrane segment spans residues 207-227 (LLIQARWFHILGMVMFFWSSA). The Lumenal portion of the chain corresponds to 228 to 277 (HQYKCHVILSNLRRNKKGVVIHCQHRIPFGDWFEYVSSANYLAELMIYIS). The chain crosses the membrane as a helical span at residues 278-298 (MAVTFGLHNLTWWLVVTYVFS). Over 299–330 (SQALSAFFNHKFYRSTFVSYPKHRKAFLPFLF) the chain is Cytoplasmic.

Belongs to the steroid 5-alpha reductase family. Polyprenal reductase subfamily.

The protein localises to the endoplasmic reticulum membrane. The catalysed reaction is a di-trans,poly-cis-dolichal + NADP(+) = a di-trans,poly-cis-polyprenal + NADPH + H(+). The enzyme catalyses a 3-oxo-5alpha-steroid + NADP(+) = a 3-oxo-Delta(4)-steroid + NADPH + H(+). It catalyses the reaction androst-4-ene-3,17-dione + NADPH + H(+) = 5alpha-androstan-3,17-dione + NADP(+). It carries out the reaction 17beta-hydroxy-5alpha-androstan-3-one + NADP(+) = testosterone + NADPH + H(+). The protein operates within protein modification; protein glycosylation. Plays a key role in early steps of protein N-linked glycosylation by being involved in the conversion of polyprenol into dolichol. Acts as a polyprenal reductase that mediates the reduction of polyprenal into dolichal in a NADP-dependent mechanism. Dolichols are required for the synthesis of dolichol-linked monosaccharides and the oligosaccharide precursor used for N-glycosylation. Also able to convert testosterone (T) into 5-alpha-dihydrotestosterone (DHT). This is Polyprenal reductase from Mus musculus (Mouse).